The sequence spans 289 residues: Phosphatidylserine decarboxylase proenzyme (289 aa).

Catalysis depends on charge relay system; for autoendoproteolytic cleavage activity residues Asp-92, His-149, and Ser-254. Catalysis depends on Ser-254, which acts as the Schiff-base intermediate with substrate; via pyruvic acid; for decarboxylase activity. Ser-254 carries the pyruvic acid (Ser); by autocatalysis modification.

The protein belongs to the phosphatidylserine decarboxylase family. PSD-B subfamily. Prokaryotic type I sub-subfamily. Heterodimer of a large membrane-associated beta subunit and a small pyruvoyl-containing alpha subunit. The cofactor is pyruvate. Post-translationally, is synthesized initially as an inactive proenzyme. Formation of the active enzyme involves a self-maturation process in which the active site pyruvoyl group is generated from an internal serine residue via an autocatalytic post-translational modification. Two non-identical subunits are generated from the proenzyme in this reaction, and the pyruvate is formed at the N-terminus of the alpha chain, which is derived from the carboxyl end of the proenzyme. The autoendoproteolytic cleavage occurs by a canonical serine protease mechanism, in which the side chain hydroxyl group of the serine supplies its oxygen atom to form the C-terminus of the beta chain, while the remainder of the serine residue undergoes an oxidative deamination to produce ammonia and the pyruvoyl prosthetic group on the alpha chain. During this reaction, the Ser that is part of the protease active site of the proenzyme becomes the pyruvoyl prosthetic group, which constitutes an essential element of the active site of the mature decarboxylase.

The protein resides in the cell membrane. It carries out the reaction a 1,2-diacyl-sn-glycero-3-phospho-L-serine + H(+) = a 1,2-diacyl-sn-glycero-3-phosphoethanolamine + CO2. Its pathway is phospholipid metabolism; phosphatidylethanolamine biosynthesis; phosphatidylethanolamine from CDP-diacylglycerol: step 2/2. Its function is as follows. Catalyzes the formation of phosphatidylethanolamine (PtdEtn) from phosphatidylserine (PtdSer). In Pseudomonas paraeruginosa (strain DSM 24068 / PA7) (Pseudomonas aeruginosa (strain PA7)), this protein is Phosphatidylserine decarboxylase proenzyme.